The following is a 429-amino-acid chain: GTPase Obg (429 aa).

The Obg domain maps to 1 to 158 (MFYDTAKIYV…RWLLLELKLL (158 aa)). The OBG-type G domain maps to 159-329 (ADVGLVGYPN…LIYRLWEIIS (171 aa)). GTP is bound by residues 165 to 172 (GYPNAGKS), 190 to 194 (FTTLT), 212 to 215 (DIPG), 282 to 285 (NKMD), and 310 to 312 (SAL). Mg(2+) contacts are provided by Ser-172 and Thr-192. Residues 344–421 (IKEQPEEGFV…IGKFEFYFVD (78 aa)) form the OCT domain.

It belongs to the TRAFAC class OBG-HflX-like GTPase superfamily. OBG GTPase family. In terms of assembly, monomer. Mg(2+) serves as cofactor.

It is found in the cytoplasm. Functionally, an essential GTPase which binds GTP, GDP and possibly (p)ppGpp with moderate affinity, with high nucleotide exchange rates and a fairly low GTP hydrolysis rate. Plays a role in control of the cell cycle, stress response, ribosome biogenesis and in those bacteria that undergo differentiation, in morphogenesis control. The chain is GTPase Obg from Carboxydothermus hydrogenoformans (strain ATCC BAA-161 / DSM 6008 / Z-2901).